Reading from the N-terminus, the 444-residue chain is Methylenetetrahydrofolate--tRNA-(uracil-5-)-methyltransferase TrmFO (444 aa).

Residue 11–16 (GGGLAG) participates in FAD binding.

Belongs to the MnmG family. TrmFO subfamily. It depends on FAD as a cofactor.

The protein resides in the cytoplasm. The catalysed reaction is uridine(54) in tRNA + (6R)-5,10-methylene-5,6,7,8-tetrahydrofolate + NADH + H(+) = 5-methyluridine(54) in tRNA + (6S)-5,6,7,8-tetrahydrofolate + NAD(+). The enzyme catalyses uridine(54) in tRNA + (6R)-5,10-methylene-5,6,7,8-tetrahydrofolate + NADPH + H(+) = 5-methyluridine(54) in tRNA + (6S)-5,6,7,8-tetrahydrofolate + NADP(+). Functionally, catalyzes the folate-dependent formation of 5-methyl-uridine at position 54 (M-5-U54) in all tRNAs. This chain is Methylenetetrahydrofolate--tRNA-(uracil-5-)-methyltransferase TrmFO, found in Desulfotalea psychrophila (strain LSv54 / DSM 12343).